Consider the following 156-residue polypeptide: Deoxyuridine 5'-triphosphate nucleotidohydrolase (156 aa).

Substrate contacts are provided by residues Arg-74–Gly-76, Asn-87, Thr-91–Asp-93, and Lys-101.

The protein belongs to the dUTPase family. Mg(2+) serves as cofactor.

The catalysed reaction is dUTP + H2O = dUMP + diphosphate + H(+). The protein operates within pyrimidine metabolism; dUMP biosynthesis; dUMP from dCTP (dUTP route): step 2/2. Its function is as follows. This enzyme is involved in nucleotide metabolism: it produces dUMP, the immediate precursor of thymidine nucleotides and it decreases the intracellular concentration of dUTP so that uracil cannot be incorporated into DNA. The sequence is that of Deoxyuridine 5'-triphosphate nucleotidohydrolase from Wolbachia sp. subsp. Brugia malayi (strain TRS).